Here is a 153-residue protein sequence, read N- to C-terminus: Small ribosomal subunit protein bS6 (153 aa).

Residues Glu-94–Ala-153 form a disordered region.

The protein belongs to the bacterial ribosomal protein bS6 family.

Binds together with bS18 to 16S ribosomal RNA. The sequence is that of Small ribosomal subunit protein bS6 from Allorhizobium ampelinum (strain ATCC BAA-846 / DSM 112012 / S4) (Agrobacterium vitis (strain S4)).